Reading from the N-terminus, the 353-residue chain is Delta-aminolevulinic acid dehydratase (353 aa).

Catalysis depends on Lys-221, which acts as the Schiff-base intermediate with substrate. 5-aminolevulinate contacts are provided by Arg-231 and Lys-244. Mg(2+) is bound at residue Glu-260. Lys-275 acts as the Schiff-base intermediate with substrate in catalysis. Positions 301 and 340 each coordinate 5-aminolevulinate.

Belongs to the ALAD family. In terms of assembly, homooctamer. Mg(2+) serves as cofactor.

It carries out the reaction 2 5-aminolevulinate = porphobilinogen + 2 H2O + H(+). The protein operates within porphyrin-containing compound metabolism; protoporphyrin-IX biosynthesis; coproporphyrinogen-III from 5-aminolevulinate: step 1/4. In terms of biological role, catalyzes an early step in the biosynthesis of tetrapyrroles. Binds two molecules of 5-aminolevulinate per subunit, each at a distinct site, and catalyzes their condensation to form porphobilinogen. Required for nodule development. This chain is Delta-aminolevulinic acid dehydratase (hemB), found in Bradyrhizobium diazoefficiens (strain JCM 10833 / BCRC 13528 / IAM 13628 / NBRC 14792 / USDA 110).